The primary structure comprises 619 residues: Tyrosine-protein kinase ZAP-70 (619 aa).

Residues F10–C102 enclose the SH2 1 domain. The segment at N103–P162 is interdomain A. One can recognise an SH2 2 domain in the interval W163–C254. A Phosphotyrosine modification is found at Y248. The segment at P255 to L337 is interdomain B. Positions S260–P309 are disordered. At S289 the chain carries Phosphoserine. A Phosphotyrosine modification is found at Y292. Y315 bears the Phosphotyrosine; by LCK mark. Phosphotyrosine is present on Y319. The Protein kinase domain occupies L338–L600. ATP is bound by residues G345 to V352 and K369. Catalysis depends on D461, which acts as the Proton acceptor. 2 positions are modified to phosphotyrosine: Y492 and Y493. Residue K544 forms a Glycyl lysine isopeptide (Lys-Gly) (interchain with G-Cter in ubiquitin) linkage. K603 bears the N6-acetyllysine mark.

Belongs to the protein kinase superfamily. Tyr protein kinase family. SYK/ZAP-70 subfamily. Interacts with CD247/CD3Z; this interaction docks ZAP70 at the stimulated TCR. Interacts with NFAM1. Interacts with adapter protein SLA; this interaction negatively regulates T-cell receptor signaling. Interacts with FCRL3. Interacts with VAV1. Interacts with CBL; this interaction promotes ubiquitination, internalization and subsequent degradation of CD247/CD3Z. Identified in a complex with CBL and UBE2L3. Interacts with SHB. Interacts with adapter protein SLA2; this interaction negatively regulates T-cell receptor signaling. Interacts with CBLB. Interacts (via SH2 domains) with RHOH; this interaction regulates ZAP70 subcellular localization. Interacts with DEF6. Interacts (ubiquitinated form) with OTUD7B and UBASH3B. Post-translationally, phosphorylated on tyrosine residues upon T-cell antigen receptor (TCR) stimulation. Phosphorylation of Tyr-315 and Tyr-319 are essential for ZAP70 positive function on T-lymphocyte activation whereas Tyr-292 has a negative regulatory role. Within the C-terminal kinase domain, Tyr-492 and Tyr-493 are phosphorylated after TCR induction, Tyr-492 playing a negative regulatory role and Tyr-493 a positive. Tyr-493 is dephosphorylated by PTN22. In terms of processing, ubiquitinated in response to T cell activation. Deubiquitinated by OTUD7B. In terms of tissue distribution, expressed in T- and natural killer cells. Also present in early thymocytes and pro/pre B-cells.

It localises to the cytoplasm. Its subcellular location is the cell membrane. It catalyses the reaction L-tyrosyl-[protein] + ATP = O-phospho-L-tyrosyl-[protein] + ADP + H(+). Activated by phosphorylation at Tyr-493 in the activation loop. Inhibited by staurosporine. Its function is as follows. Tyrosine kinase that plays an essential role in regulation of the adaptive immune response. Regulates motility, adhesion and cytokine expression of mature T-cells, as well as thymocyte development. Also contributes to the development and activation of primary B-lymphocytes. When antigen presenting cells (APC) activate T-cell receptor (TCR), a serie of phosphorylations lead to the recruitment of ZAP70 to the doubly phosphorylated TCR component CD247/CD3Z through ITAM motif at the plasma membrane. This recruitment serves to localization to the stimulated TCR and to relieve its autoinhibited conformation. Release of ZAP70 active conformation is further stabilized by phosphorylation mediated by LCK. Subsequently, ZAP70 phosphorylates at least 2 essential adapter proteins: LAT and LCP2. In turn, a large number of signaling molecules are recruited and ultimately lead to lymphokine production, T-cell proliferation and differentiation. Furthermore, ZAP70 controls cytoskeleton modifications, adhesion and mobility of T-lymphocytes, thus ensuring correct delivery of effectors to the APC. ZAP70 is also required for TCR-CD247/CD3Z internalization and degradation through interaction with the E3 ubiquitin-protein ligase CBL and adapter proteins SLA and SLA2. Thus, ZAP70 regulates both T-cell activation switch on and switch off by modulating TCR expression at the T-cell surface. During thymocyte development, ZAP70 promotes survival and cell-cycle progression of developing thymocytes before positive selection (when cells are still CD4/CD8 double negative). Additionally, ZAP70-dependent signaling pathway may also contribute to primary B-cells formation and activation through B-cell receptor (BCR). This Homo sapiens (Human) protein is Tyrosine-protein kinase ZAP-70 (ZAP70).